A 516-amino-acid polypeptide reads, in one-letter code: Oxysterol-binding protein-like protein 1 (516 aa).

Disordered regions lie at residues 168–240 (PLGK…SQKS) and 459–501 (KQEI…EEGK). Residues 178-187 (SRTTSSQSVA) are compositionally biased toward polar residues. S182 carries the phosphoserine modification. Positions 197-206 (TSKKKSSKKN) are enriched in basic residues. Residues 218–238 (DRSSTAPSTAESNNEHLSSSQ) show a composition bias toward polar residues.

The protein belongs to the OSBP family.

It localises to the endoplasmic reticulum. In Schizosaccharomyces pombe (strain 972 / ATCC 24843) (Fission yeast), this protein is Oxysterol-binding protein-like protein 1 (obp1).